We begin with the raw amino-acid sequence, 366 residues long: Alcohol dehydrogenase (366 aa).

Residues cysteine 41, histidine 62, glutamate 63, and aspartate 167 each coordinate Zn(2+).

Belongs to the zinc-containing alcohol dehydrogenase family. As to quaternary structure, homotetramer. Requires Zn(2+) as cofactor.

It carries out the reaction a primary alcohol + NAD(+) = an aldehyde + NADH + H(+). The catalysed reaction is a secondary alcohol + NAD(+) = a ketone + NADH + H(+). It catalyses the reaction (R,R)-butane-2,3-diol + NAD(+) = (R)-acetoin + NADH + H(+). The enzyme catalyses an aldehyde + NAD(+) + H2O = a carboxylate + NADH + 2 H(+). In terms of biological role, multifunctional alcohol dehydrogenase exhibiting NAD(+)-dependent dehydrogenase activities for 2,3-butanediol, ethanol and acetaldehyde, and reductase activities for acetoin (NADH-dependent), and diacetyl and acetaldehyde (independently of whether NADH or NADPH is the reductant). The rate of oxidation of 2,3-butanediol is much higher than for the oxidation of ethanol. Has acetaldehyde dehydrogenase activity leading to acetate formation. May function in the release of excess reducing power in the absence of exogenous hydrogen acceptors such as oxygen. This Cupriavidus necator (Alcaligenes eutrophus) protein is Alcohol dehydrogenase (adh).